Consider the following 241-residue polypeptide: Small ribosomal subunit protein uS2 (241 aa).

This sequence belongs to the universal ribosomal protein uS2 family.

In Pectobacterium atrosepticum (strain SCRI 1043 / ATCC BAA-672) (Erwinia carotovora subsp. atroseptica), this protein is Small ribosomal subunit protein uS2.